The primary structure comprises 24 residues: U4-ctenitoxin-Co1b (24 aa).

In terms of processing, disulfide bonds are present. Expressed by the venom gland.

Its subcellular location is the secreted. Omega-agatoxins are antagonists of voltage-gated calcium channels (Cav). The polypeptide is U4-ctenitoxin-Co1b (Ctenus ornatus (Brazilian spider)).